We begin with the raw amino-acid sequence, 235 residues long: Sugar fermentation stimulation protein homolog (235 aa).

Belongs to the SfsA family.

This Photorhabdus laumondii subsp. laumondii (strain DSM 15139 / CIP 105565 / TT01) (Photorhabdus luminescens subsp. laumondii) protein is Sugar fermentation stimulation protein homolog.